The following is a 156-amino-acid chain: Rhombotin-1 (156 aa).

LIM zinc-binding domains follow at residues 22-84 (KGCA…LFGT) and 86-148 (GNCA…GHLN).

As to expression, expressed in the brain and not in the thymus.

It is found in the nucleus. In terms of biological role, may be involved in gene regulation within neural lineage cells potentially by direct DNA binding or by binding to other transcription factors. The sequence is that of Rhombotin-1 (Lmo1) from Mus musculus (Mouse).